The chain runs to 511 residues: IWS1-like protein (511 aa).

Residues 1–200 (MSDHEEESHG…DDGPVDRHGR (200 aa)) form a disordered region. 2 stretches are compositionally biased toward low complexity: residues 11–30 (ASPT…PISP) and 55–86 (APAS…SPVK). Residues 94–103 (DSDEDSDAEE) are compositionally biased toward acidic residues. A compositionally biased stretch (basic and acidic residues) spans 134–143 (HEGTSKKEPT). The span at 166–179 (LDEFVEGRDEEESQ) shows a compositional bias: acidic residues. Residues 294 to 374 (SALSEWLAPL…GEWARPIYHL (81 aa)) form the TFIIS N-terminal domain. Residues 382-454 (SRQEREERDY…RARVPKPSTK (73 aa)) form a disordered region. 2 stretches are compositionally biased toward basic and acidic residues: residues 383–395 (RQER…SRMP) and 414–425 (DQPKRPRIRDAD).

Belongs to the IWS1 family.

Its subcellular location is the nucleus. The sequence is that of IWS1-like protein from Caenorhabditis elegans.